Consider the following 247-residue polypeptide: MQVEAHLQKIIEKDGKVHLTLIDPASQTPDRAAEIALAAVEGGTDAIMIGGSTGASGTLLDETVIKIKENIHVPTILFPGSSAGLSKYADAVFFMSLLNSRDLGYVITNQVLGAPLVYRSQIEPISMAYLIVEPGGTVGWVGDAKLIPRKKPEIAAVYALAGKYLGMHYTYLEAGSGADSPVNPEMIGAVKQVLGENKLIVGGGIRNAETAKICTSAGADMIVTGTVVEEVKDVTAKVAEIVSAIKR.

Asp-23 and Ser-52 together coordinate Mg(2+). Sn-glycerol 1-phosphate contacts are provided by residues 171–177 (YLEAGSG), 203–204 (GG), and 225–226 (GT).

The protein belongs to the GGGP/HepGP synthase family. Group II subfamily. Mg(2+) serves as cofactor.

The protein localises to the cytoplasm. The enzyme catalyses sn-glycerol 1-phosphate + (2E,6E,10E)-geranylgeranyl diphosphate = sn-3-O-(geranylgeranyl)glycerol 1-phosphate + diphosphate. It participates in membrane lipid metabolism; glycerophospholipid metabolism. Functionally, prenyltransferase that catalyzes the transfer of the geranylgeranyl moiety of geranylgeranyl diphosphate (GGPP) to the C3 hydroxyl of sn-glycerol-1-phosphate (G1P). This reaction is the first ether-bond-formation step in the biosynthesis of archaeal membrane lipids. The sequence is that of Geranylgeranylglyceryl phosphate synthase from Methanosarcina mazei (strain ATCC BAA-159 / DSM 3647 / Goe1 / Go1 / JCM 11833 / OCM 88) (Methanosarcina frisia).